A 189-amino-acid polypeptide reads, in one-letter code: Large ribosomal subunit protein uL5 (189 aa).

It belongs to the universal ribosomal protein uL5 family. As to quaternary structure, part of the 50S ribosomal subunit; part of the 5S rRNA/L5/L18/L25 subcomplex. Contacts the 5S rRNA and the P site tRNA. Forms a bridge to the 30S subunit in the 70S ribosome.

Functionally, this is one of the proteins that bind and probably mediate the attachment of the 5S RNA into the large ribosomal subunit, where it forms part of the central protuberance. In the 70S ribosome it contacts protein S13 of the 30S subunit (bridge B1b), connecting the 2 subunits; this bridge is implicated in subunit movement. Contacts the P site tRNA; the 5S rRNA and some of its associated proteins might help stabilize positioning of ribosome-bound tRNAs. The polypeptide is Large ribosomal subunit protein uL5 (Salinispora tropica (strain ATCC BAA-916 / DSM 44818 / JCM 13857 / NBRC 105044 / CNB-440)).